A 304-amino-acid chain; its full sequence is MAVSVKRLINDFDLEVLVEGNEDVKIEVNDVNRPGLQLAGFYNYFAPERIQIIGKAEWSFLQDMQIEVRKKRVKKYLSFNITCLIISRGLDPHEEFIKEARKNNIWVLRSKSVTTKLISKITLYLADKLAPETRLHGVLVDVSGIGILITGESGIGKSETALELIKRGHRLITDDAVDIRESDGTLIGSSPKITIGMLEVRGIGIIDVTQLYGLSSVLEEKEIKLIMHFEHWKDDNDYDRLGIDNQYMDILGIPVKKLTVPVRPGRNIAVIIEAAAVNYRYSLMSKISPVDIIENRMSAVSDEA.

Active-site residues include histidine 136 and lysine 157. 151–158 (GESGIGKS) provides a ligand contact to ATP. Serine 158 provides a ligand contact to Mg(2+). The Proton acceptor; for phosphorylation activity. Proton donor; for dephosphorylation activity role is filled by aspartate 175. The segment at 198-207 (LEVRGIGIID) is important for the catalytic mechanism of both phosphorylation and dephosphorylation. Residue glutamate 199 coordinates Mg(2+). Residue arginine 240 is part of the active site. Residues 261-266 (PVRPGR) are important for the catalytic mechanism of dephosphorylation.

The protein belongs to the HPrK/P family. As to quaternary structure, homohexamer. Requires Mg(2+) as cofactor.

It carries out the reaction [HPr protein]-L-serine + ATP = [HPr protein]-O-phospho-L-serine + ADP + H(+). The catalysed reaction is [HPr protein]-O-phospho-L-serine + phosphate + H(+) = [HPr protein]-L-serine + diphosphate. Functionally, catalyzes the ATP- as well as the pyrophosphate-dependent phosphorylation of a specific serine residue in HPr, a phosphocarrier protein of the phosphoenolpyruvate-dependent sugar phosphotransferase system (PTS). HprK/P also catalyzes the pyrophosphate-producing, inorganic phosphate-dependent dephosphorylation (phosphorolysis) of seryl-phosphorylated HPr (P-Ser-HPr). The two antagonistic activities of HprK/P are regulated by several intracellular metabolites, which change their concentration in response to the absence or presence of rapidly metabolisable carbon sources (glucose, fructose, etc.) in the growth medium. Therefore, by controlling the phosphorylation state of HPr, HPrK/P is a sensor enzyme that plays a major role in the regulation of carbon metabolism and sugar transport: it mediates carbon catabolite repression (CCR), and regulates PTS-catalyzed carbohydrate uptake and inducer exclusion. The sequence is that of HPr kinase/phosphorylase from Clostridium botulinum (strain Alaska E43 / Type E3).